We begin with the raw amino-acid sequence, 77 residues long: U9-lycotoxin-Ls1a (77 aa).

The first 20 residues, 1-20 (MKLLLFTALVLVVIVSLIEA), serve as a signal peptide directing secretion. A propeptide spanning residues 21 to 26 (EAENER) is cleaved from the precursor.

The protein belongs to the neurotoxin 19 (CSTX) family. 08 (U8-Lctx) subfamily. In terms of processing, contains 4 disulfide bonds. As to expression, expressed by the venom gland.

The protein localises to the secreted. The polypeptide is U9-lycotoxin-Ls1a (Lycosa singoriensis (Wolf spider)).